The sequence spans 239 residues: 7-cyano-7-deazaguanine synthase (239 aa).

8 to 18 (FSGGLDSTASL) serves as a coordination point for ATP. Residues cysteine 194, cysteine 209, cysteine 212, and cysteine 215 each coordinate Zn(2+).

Belongs to the QueC family.

The enzyme catalyses 7-carboxy-7-deazaguanine + NH4(+) + ATP = 7-cyano-7-deazaguanine + ADP + phosphate + H2O + H(+). It participates in purine metabolism; 7-cyano-7-deazaguanine biosynthesis. Catalyzes the ATP-dependent conversion of 7-carboxy-7-deazaguanine (CDG) to 7-cyano-7-deazaguanine (preQ(0)). This is 7-cyano-7-deazaguanine synthase from Pyrococcus abyssi (strain GE5 / Orsay).